The primary structure comprises 273 residues: UPF0173 metal-dependent hydrolase Bpro_4324 (273 aa).

It belongs to the UPF0173 family.

The sequence is that of UPF0173 metal-dependent hydrolase Bpro_4324 from Polaromonas sp. (strain JS666 / ATCC BAA-500).